A 435-amino-acid polypeptide reads, in one-letter code: Keratin, type I cytoskeletal 18 (435 aa).

Residues 2–84 (SYRPGSYSVS…SVSGSGLVGN (83 aa)) are head. The tract at residues 85–120 (EKETMIGLNDRLAAYLETVRNLEQANSKLEFQIREA) is coil 1A. One can recognise an IF rod domain in the interval 85–396 (EKETMIGLND…RLLDGEDFRL (312 aa)). The tract at residues 121–137 (LEKKGPTTRDLSPFEKT) is linker 1. Residues 138 to 229 (LEDLRKKVYD…QNHNQEVNDL (92 aa)) form a coil 1B region. A linker 12 region spans residues 230–253 (RNQIAQSGVQVDVDAPKGQDLAQV). Residues 254–391 (LAEVRAQYES…IATYRRLLDG (138 aa)) form a coil 2 region. Residues 392–435 (EDFRLQDALVDQSSTKSIKKVTVTQTLVDGKVVSESTNTKEIGK) are tail.

The protein belongs to the intermediate filament family. Heterotetramer of two type I and two type II keratins. Keratin-18 associates with keratin-8. In terms of processing, phosphorylated. Proteolytically cleaved by caspases during epithelial cell apoptosis.

Its function is as follows. When phosphorylated, plays a role in filament reorganization. The polypeptide is Keratin, type I cytoskeletal 18 (Acipenser baerii (Siberian sturgeon)).